The sequence spans 196 residues: UMP-CMP kinase (196 aa).

13-18 is a binding site for ATP; the sequence is GAGKGT. Position 33 is a phosphoserine (Ser-33). Positions 33–63 are NMP; the sequence is SAGELLRDERKNPDSQYGELIEKYIKEGKIV. Residue Arg-39 participates in a ribonucleoside 5'-phosphate binding. N6-acetyllysine is present on residues Lys-43 and Lys-55. 61 to 63 is an a ribonucleoside 5'-phosphate binding site; that stretch reads KIV. Lys-73 participates in a covalent cross-link: Glycyl lysine isopeptide (Lys-Gly) (interchain with G-Cter in SUMO2). 93-96 contributes to the a ribonucleoside 5'-phosphate binding site; sequence GFPR. Residue Asn-100 participates in CMP binding. Position 106 is an N6-succinyllysine (Lys-106). An LID region spans residues 133 to 143; the sequence is ERGKSSGRSDD. Position 134 (Arg-134) interacts with ATP. Residues Arg-140 and Arg-151 each coordinate a ribonucleoside 5'-phosphate. Lys-179 provides a ligand contact to ATP. Ser-180 carries the post-translational modification Phosphoserine.

Belongs to the adenylate kinase family. UMP-CMP kinase subfamily. As to quaternary structure, monomer. Mg(2+) is required as a cofactor.

The protein localises to the nucleus. Its subcellular location is the cytoplasm. It catalyses the reaction CMP + ATP = CDP + ADP. The enzyme catalyses dCMP + ATP = dCDP + ADP. It carries out the reaction UMP + ATP = UDP + ADP. The catalysed reaction is a 2'-deoxyribonucleoside 5'-diphosphate + ATP = a 2'-deoxyribonucleoside 5'-triphosphate + ADP. It catalyses the reaction a ribonucleoside 5'-diphosphate + ATP = a ribonucleoside 5'-triphosphate + ADP. Catalyzes the phosphorylation of pyrimidine nucleoside monophosphates at the expense of ATP. Plays an important role in de novo pyrimidine nucleotide biosynthesis. Has preference for UMP and CMP as phosphate acceptors. Also displays broad nucleoside diphosphate kinase activity. This is UMP-CMP kinase (Cmpk1) from Rattus norvegicus (Rat).